Consider the following 257-residue polypeptide: Adenylate kinase (257 aa).

Residue Gly52 to Thr57 participates in ATP binding. The NMP stretch occupies residues Ala72–Val101. Residues Thr73, Arg78, Gly99–Val101, Gly128–Arg131, and Gln135 contribute to the AMP site. Residues Gly169–Asp206 are LID. ATP contacts are provided by residues Arg170 and Ser179–Tyr180. Residues Arg203 and Arg214 each contribute to the AMP site. Gln242 serves as a coordination point for ATP.

This sequence belongs to the adenylate kinase family. AK2 subfamily. Monomer.

The protein localises to the cytoplasm. Its subcellular location is the cytosol. It localises to the mitochondrion intermembrane space. It catalyses the reaction AMP + ATP = 2 ADP. Catalyzes the reversible transfer of the terminal phosphate group between ATP and AMP. Plays an important role in cellular energy homeostasis and in adenine nucleotide metabolism. Adenylate kinase activity is critical for regulation of the phosphate utilization and the AMP de novo biosynthesis pathways. This is Adenylate kinase (adk1) from Aspergillus clavatus (strain ATCC 1007 / CBS 513.65 / DSM 816 / NCTC 3887 / NRRL 1 / QM 1276 / 107).